The chain runs to 1070 residues: Isoleucine--tRNA ligase (1070 aa).

The 'HIGH' region motif lies at 50 to 60 (PYTSGAAHMGT). The short motif at 606–610 (GMSKS) is the 'KMSKS' region element. Lys-609 contacts ATP.

This sequence belongs to the class-I aminoacyl-tRNA synthetase family. IleS type 2 subfamily. As to quaternary structure, monomer. Zn(2+) is required as a cofactor.

It is found in the cytoplasm. The catalysed reaction is tRNA(Ile) + L-isoleucine + ATP = L-isoleucyl-tRNA(Ile) + AMP + diphosphate. Functionally, catalyzes the attachment of isoleucine to tRNA(Ile). As IleRS can inadvertently accommodate and process structurally similar amino acids such as valine, to avoid such errors it has two additional distinct tRNA(Ile)-dependent editing activities. One activity is designated as 'pretransfer' editing and involves the hydrolysis of activated Val-AMP. The other activity is designated 'posttransfer' editing and involves deacylation of mischarged Val-tRNA(Ile). This chain is Isoleucine--tRNA ligase, found in Halobacterium salinarum (strain ATCC 700922 / JCM 11081 / NRC-1) (Halobacterium halobium).